The sequence spans 85 residues: Neurotoxin BmKAEP2 (85 aa).

A signal peptide spans 1–21 (MKLFLLLVISASMLIDGLVNA). The LCN-type CS-alpha/beta domain occupies 22–82 (DGYIRGSNGC…TWKSESNTCG (61 aa)). 4 cysteine pairs are disulfide-bonded: Cys-31/Cys-81, Cys-35/Cys-56, Cys-42/Cys-63, and Cys-46/Cys-65.

Belongs to the long (4 C-C) scorpion toxin superfamily. Sodium channel inhibitor family. Beta subfamily. Expressed by the venom gland.

Its subcellular location is the secreted. In terms of biological role, depressant insect beta-toxins cause a transient contraction paralysis followed by a slow flaccid paralysis. They bind voltage-independently at site-4 of sodium channels (Nav) and shift the voltage of activation toward more negative potentials thereby affecting sodium channel activation and promoting spontaneous and repetitive firing. This toxin is active only on insects. Has potential anti-epilepsy effect. In Olivierus martensii (Manchurian scorpion), this protein is Neurotoxin BmKAEP2.